A 463-amino-acid polypeptide reads, in one-letter code: UDP-glucosyltransferase A1 (463 aa).

The protein belongs to the UDP-glycosyltransferase family.

It carries out the reaction 18-hydroxy-(9Z)-octadecenoate + UDP-alpha-D-glucose = (9Z)-18-hydroxyoctadec-9-enoate 18-O-beta-D-glucoside + UDP + H(+). It catalyses the reaction 17-hydroxy-(9Z)-octadecenoate + UDP-alpha-D-glucose = (9Z)-17-hydroxyoctadec-9-enoate 17-O-beta-D-glucoside + UDP + H(+). In terms of biological role, catalyzes the first glycosylation step of sophorolipid biosynthesis, the coupling of glucose to a hydroxylated fatty acid to give rise to a glucolipid. Can glycosylate all hydroxyl fatty acids generated by cytochrome P450 monooxygenases CYP52M1, CYP52N1 and CYP52E3 into their corresponding glucolipids. Main products are 17-O- and 18-O-(beta-D-glucopyranosyl)-octadecenoic acids. The sequence is that of UDP-glucosyltransferase A1 from Starmerella bombicola (Yeast).